An 81-amino-acid polypeptide reads, in one-letter code: UPF0180 protein YkuS (81 aa).

The protein belongs to the UPF0180 family.

This Bacillus subtilis (strain 168) protein is UPF0180 protein YkuS (ykuS).